A 300-amino-acid polypeptide reads, in one-letter code: Bifunctional protein FolD (300 aa).

NADP(+) contacts are provided by residues 168-170, S193, and I234; that span reads GRS.

Belongs to the tetrahydrofolate dehydrogenase/cyclohydrolase family. Homodimer.

It catalyses the reaction (6R)-5,10-methylene-5,6,7,8-tetrahydrofolate + NADP(+) = (6R)-5,10-methenyltetrahydrofolate + NADPH. The catalysed reaction is (6R)-5,10-methenyltetrahydrofolate + H2O = (6R)-10-formyltetrahydrofolate + H(+). Its pathway is one-carbon metabolism; tetrahydrofolate interconversion. Its function is as follows. Catalyzes the oxidation of 5,10-methylenetetrahydrofolate to 5,10-methenyltetrahydrofolate and then the hydrolysis of 5,10-methenyltetrahydrofolate to 10-formyltetrahydrofolate. The chain is Bifunctional protein FolD from Ehrlichia ruminantium (strain Gardel).